We begin with the raw amino-acid sequence, 288 residues long: MSALDDLPPLRDVIRRHGLSAQKSLGQNFLLDLNLTGRIARASGPLEGATVVEVGPGPGGLTRALLALGARRVIAIERDQRCLDALAEVSDHYPGRLEVISGDALKVDVRPLVGDGEVRVVANLPYNIATLLLIGWLSTDPWPPWFSSLTLMFQKEVAERIVAAPGSKAYGRLAVLAGWRTTARIAFDVAPSAFVPPPKVTSSVVHLVPRSEPLPCALSALEKVTEAAFGQRRKMLRQSLKSLGVDTAALLKATGVEETARAEEIDVDGFVRLANTFAQLKSGAGAAA.

Positions 28, 30, 55, 77, 103, and 123 each coordinate S-adenosyl-L-methionine.

Belongs to the class I-like SAM-binding methyltransferase superfamily. rRNA adenine N(6)-methyltransferase family. RsmA subfamily.

It localises to the cytoplasm. It carries out the reaction adenosine(1518)/adenosine(1519) in 16S rRNA + 4 S-adenosyl-L-methionine = N(6)-dimethyladenosine(1518)/N(6)-dimethyladenosine(1519) in 16S rRNA + 4 S-adenosyl-L-homocysteine + 4 H(+). In terms of biological role, specifically dimethylates two adjacent adenosines (A1518 and A1519) in the loop of a conserved hairpin near the 3'-end of 16S rRNA in the 30S particle. May play a critical role in biogenesis of 30S subunits. The protein is Ribosomal RNA small subunit methyltransferase A of Xanthobacter autotrophicus (strain ATCC BAA-1158 / Py2).